The following is a 110-amino-acid chain: Heat shock protein Hsp-12.2 (110 aa).

The region spanning 15-110 is the sHSP domain; the sequence is DWPLQHNDGV…VLTITASKKA (96 aa).

The protein belongs to the small heat shock protein (HSP20) family.

This is Heat shock protein Hsp-12.2 (hsp-12.2) from Caenorhabditis elegans.